We begin with the raw amino-acid sequence, 213 residues long: Putative nascent polypeptide-associated complex subunit alpha-like protein (213 aa).

Residues 1 to 46 (MPGEATETVPAIEQQLLQPQAETGSGTESDSDESVPELEEQDSTQV) form a disordered region. A compositionally biased stretch (polar residues) spans 15 to 28 (QLLQPQAETGSGTE). Acidic residues predominate over residues 29-42 (SDSDESVPELEEQD). 2 positions are modified to phosphoserine: Ser43 and Ser131. The 66-residue stretch at 69–134 (RRSEKKARKA…AKIEDLSQEA (66 aa)) folds into the NAC-A/B domain. An N6-acetyllysine; alternate modification is found at Lys141. Lys141 participates in a covalent cross-link: Glycyl lysine isopeptide (Lys-Gly) (interchain with G-Cter in SUMO2); alternate. Thr160 is modified (phosphothreonine). Residues Ser165, Ser185, and Ser201 each carry the phosphoserine modification. The region spanning 175-211 (VEIKDIELVLSQANVWGAKAVRALKNSNDIVNAIMEL) is the UBA domain. The residue at position 212 (Thr212) is a Phosphothreonine.

The protein belongs to the NAC-alpha family.

The protein is Putative nascent polypeptide-associated complex subunit alpha-like protein of Homo sapiens (Human).